The chain runs to 418 residues: Glutamyl-tRNA reductase (418 aa).

Residues 49 to 52 (TCNR), Ser109, 114 to 116 (EPQ), and Gln120 each bind substrate. Cys50 (nucleophile) is an active-site residue. 189-194 (GAGETI) contacts NADP(+).

Belongs to the glutamyl-tRNA reductase family. Homodimer.

It catalyses the reaction (S)-4-amino-5-oxopentanoate + tRNA(Glu) + NADP(+) = L-glutamyl-tRNA(Glu) + NADPH + H(+). It functions in the pathway porphyrin-containing compound metabolism; protoporphyrin-IX biosynthesis; 5-aminolevulinate from L-glutamyl-tRNA(Glu): step 1/2. Its function is as follows. Catalyzes the NADPH-dependent reduction of glutamyl-tRNA(Glu) to glutamate 1-semialdehyde (GSA). This is Glutamyl-tRNA reductase from Enterobacter sp. (strain 638).